The primary structure comprises 342 residues: Dihydroorotase (342 aa).

2 residues coordinate Zn(2+): H13 and H15. Substrate is bound by residues 15 to 17 (HLR) and N41. Positions 98, 135, and 173 each coordinate Zn(2+). K98 is subject to N6-carboxylysine. H135 lines the substrate pocket. L218 provides a ligand contact to substrate. D246 is a Zn(2+) binding site. D246 is a catalytic residue. Positions 250 and 262 each coordinate substrate.

The protein belongs to the metallo-dependent hydrolases superfamily. DHOase family. Class II DHOase subfamily. In terms of assembly, homodimer. The cofactor is Zn(2+).

It carries out the reaction (S)-dihydroorotate + H2O = N-carbamoyl-L-aspartate + H(+). It participates in pyrimidine metabolism; UMP biosynthesis via de novo pathway; (S)-dihydroorotate from bicarbonate: step 3/3. In terms of biological role, catalyzes the reversible cyclization of carbamoyl aspartate to dihydroorotate. This chain is Dihydroorotase, found in Vibrio atlanticus (strain LGP32) (Vibrio splendidus (strain Mel32)).